Reading from the N-terminus, the 101-residue chain is Small ribosomal subunit protein uS14 (101 aa).

The protein belongs to the universal ribosomal protein uS14 family. As to quaternary structure, part of the 30S ribosomal subunit. Contacts proteins S3 and S10.

In terms of biological role, binds 16S rRNA, required for the assembly of 30S particles and may also be responsible for determining the conformation of the 16S rRNA at the A site. This is Small ribosomal subunit protein uS14 from Idiomarina loihiensis (strain ATCC BAA-735 / DSM 15497 / L2-TR).